A 149-amino-acid chain; its full sequence is 3-hydroxyacyl-[acyl-carrier-protein] dehydratase FabZ (149 aa).

Histidine 53 is an active-site residue.

Belongs to the thioester dehydratase family. FabZ subfamily.

Its subcellular location is the cytoplasm. The enzyme catalyses a (3R)-hydroxyacyl-[ACP] = a (2E)-enoyl-[ACP] + H2O. Its function is as follows. Involved in unsaturated fatty acids biosynthesis. Catalyzes the dehydration of short chain beta-hydroxyacyl-ACPs and long chain saturated and unsaturated beta-hydroxyacyl-ACPs. The chain is 3-hydroxyacyl-[acyl-carrier-protein] dehydratase FabZ from Neisseria meningitidis serogroup B (strain ATCC BAA-335 / MC58).